Consider the following 475-residue polypeptide: Chromosomal replication initiator protein DnaA (475 aa).

The domain I, interacts with DnaA modulators stretch occupies residues 1-71 (MTNDTWNEVR…RQLSAHGAGA (71 aa)). The segment at 71–133 (ADRVKFTVSP…PAQPRELPGA (63 aa)) is domain II. Over residues 107 to 127 (APAPVHHTAPAPAPVAAPAQP) the composition is skewed to low complexity. A disordered region spans residues 107–129 (APAPVHHTAPAPAPVAAPAQPRE). The interval 134–355 (KLNPNFTFAN…GALTRLFAFA (222 aa)) is domain III, AAA+ region. 4 residues coordinate ATP: Gly-178, Gly-180, Lys-181, and Thr-182. A domain IV, binds dsDNA region spans residues 356 to 475 (DLVRREVTVD…AELLRRTLEA (120 aa)).

Belongs to the DnaA family. Oligomerizes as a right-handed, spiral filament on DNA at oriC.

It is found in the cytoplasm. Its function is as follows. Plays an essential role in the initiation and regulation of chromosomal replication. ATP-DnaA binds to the origin of replication (oriC) to initiate formation of the DNA replication initiation complex once per cell cycle. Binds the DnaA box (a 9 base pair repeat at the origin) and separates the double-stranded (ds)DNA. Forms a right-handed helical filament on oriC DNA; dsDNA binds to the exterior of the filament while single-stranded (ss)DNA is stabiized in the filament's interior. The ATP-DnaA-oriC complex binds and stabilizes one strand of the AT-rich DNA unwinding element (DUE), permitting loading of DNA polymerase. After initiation quickly degrades to an ADP-DnaA complex that is not apt for DNA replication. Binds acidic phospholipids. The chain is Chromosomal replication initiator protein DnaA from Jannaschia sp. (strain CCS1).